A 242-amino-acid polypeptide reads, in one-letter code: Uridylate kinase (242 aa).

12–15 provides a ligand contact to ATP; it reads KLSG. Residues 20 to 25 are involved in allosteric activation by GTP; the sequence is GNDGFG. UMP is bound at residue G54. Positions 55 and 59 each coordinate ATP. UMP contacts are provided by residues D74 and 135–142; that span reads TGNPYFST. ATP-binding residues include N163, Y169, and D172.

It belongs to the UMP kinase family. In terms of assembly, homohexamer.

It is found in the cytoplasm. It catalyses the reaction UMP + ATP = UDP + ADP. Its pathway is pyrimidine metabolism; CTP biosynthesis via de novo pathway; UDP from UMP (UMPK route): step 1/1. Allosterically activated by GTP. Inhibited by UTP. Functionally, catalyzes the reversible phosphorylation of UMP to UDP. In Listeria innocua serovar 6a (strain ATCC BAA-680 / CLIP 11262), this protein is Uridylate kinase.